The chain runs to 368 residues: Agmatine deiminase (368 aa).

Cys357 (amidino-cysteine intermediate) is an active-site residue.

This sequence belongs to the agmatine deiminase family. As to quaternary structure, homodimer.

It catalyses the reaction agmatine + H2O = N-carbamoylputrescine + NH4(+). Its pathway is amine and polyamine biosynthesis; putrescine biosynthesis via agmatine pathway; N-carbamoylputrescine from agmatine: step 1/1. In terms of biological role, mediates the hydrolysis of agmatine into N-carbamoylputrescine in the arginine decarboxylase (ADC) pathway of putrescine biosynthesis, a basic polyamine. This Ectopseudomonas mendocina (strain ymp) (Pseudomonas mendocina) protein is Agmatine deiminase.